The sequence spans 126 residues: Adenosine 5'-monophosphoramidase HINT1 (126 aa).

N-acetylalanine is present on Ala-2. One can recognise an HIT domain in the interval 18–126 (IFGKIIRKEI…GGRQMNWPPG (109 aa)). Lys-21 and Lys-30 each carry N6-acetyllysine. 43–44 (DI) serves as a coordination point for AMP. A phosphoserine mark is found at Ser-45 and Ser-72. Residues Asn-99, 105-107 (GQS), and 112-114 (HLH) contribute to the AMP site. Positions 110 to 114 (HIHLH) match the Histidine triad motif motif. His-112 serves as the catalytic Tele-AMP-histidine intermediate.

Belongs to the HINT family. Homodimer. Interacts with CDK7. Interacts with RUVBL1 and RUVBL2 and is associated with the LEF1/TCF1-CTNNB1 complex and with a KAT5 histone acetyltransferase complex. Identified in a complex with MITF and CTNNB1. Interacts with CDC34 and RBX1, and is part of a SCF (SKP2-CUL1-F-box protein) E3 ubiquitin-protein ligase complex. Interacts with SUMO1, SUMO2 and RGS17. Interacts with the Ten-1 ICD form of TENM1. Interacts with CALM1; interaction increases in the presence of calcium ions.

It localises to the cytoplasm. The protein resides in the nucleus. The catalysed reaction is adenosine 5'-phosphoramidate + H2O = AMP + NH4(+). In terms of biological role, exhibits adenosine 5'-monophosphoramidase activity, hydrolyzing purine nucleotide phosphoramidates with a single phosphate group such as adenosine 5'monophosphoramidate (AMP-NH2) to yield AMP and NH2. Hydrolyzes adenosine 5'monophosphomorpholidate (AMP-morpholidate) and guanosine 5'monophosphomorpholidate (GMP-morpholidate). Hydrolyzes lysyl-AMP (AMP-N-epsilon-(N-alpha-acetyl lysine methyl ester)) generated by lysine tRNA ligase, as well as Met-AMP, His-AMP and Asp-AMP, lysyl-GMP (GMP-N-epsilon-(N-alpha-acetyl lysine methyl ester)) and AMP-N-alanine methyl ester. Can also convert adenosine 5'-O-phosphorothioate and guanosine 5'-O-phosphorothioate to the corresponding nucleoside 5'-O-phosphates with concomitant release of hydrogen sulfide. In addition, functions as a scaffolding protein that modulates transcriptional activation by the LEF1/TCF1-CTNNB1 complex and by the complex formed with MITF and CTNNB1. Modulates p53/TP53 levels and p53/TP53-mediated apoptosis. Modulates proteasomal degradation of target proteins by the SCF (SKP2-CUL1-F-box protein) E3 ubiquitin-protein ligase complex. Also exhibits SUMO-specific isopeptidase activity, deconjugating SUMO1 from RANGAP1 and RGS17. This Rattus norvegicus (Rat) protein is Adenosine 5'-monophosphoramidase HINT1 (Hint1).